Consider the following 400-residue polypeptide: MLDPFGKRAESLIREEFGDLLALLERVPSAISVEEPISLVSWMLESENPPQELVEVDNLEELRDLFKFYALLGAASISPYGLEAEVVKRATLRLYSERIKASKNLSETMLPVVPVGENEIPHNDLNILERRMDRNLSPEEKEKLKIKYKIPIKDLLNLWGSSLKEVYIRNGYAYLRWETALKMWEKAFEKRFERAVNILYEYRDELPEFYHRLREKLEEIAEEYFKERGEMFKGTASPLRFDLFPPCVKEALKGVPAGMRNYAITVLLTSFLSYARICPNPPKKDVRIKDCINDLKIIEEEILPVIIEAGNRCKPPLFEDQPHEIKNIWYHLGFGLTDSPTMEDSGNSTWYFPPNCDKIRANAPQLCKPDKYCRGIKNPLSYYLKRLYLEGKKKEGETSE.

The [4Fe-4S] cluster site is built by Cys247, Cys356, Cys367, and Cys373.

The protein belongs to the eukaryotic-type primase large subunit family. Heterodimer of a small subunit (PriS) and a large subunit (PriL). [4Fe-4S] cluster is required as a cofactor.

Regulatory subunit of DNA primase, an RNA polymerase that catalyzes the synthesis of short RNA molecules used as primers for DNA polymerase during DNA replication. Stabilizes and modulates the activity of the small subunit, increasing the rate of DNA synthesis, and conferring RNA synthesis capability. The DNA polymerase activity may enable DNA primase to also catalyze primer extension after primer synthesis. May also play a role in DNA repair. The polypeptide is DNA primase large subunit PriL (Thermococcus kodakarensis (strain ATCC BAA-918 / JCM 12380 / KOD1) (Pyrococcus kodakaraensis (strain KOD1))).